The primary structure comprises 228 residues: Small ribosomal subunit protein uS3 (228 aa).

The KH type-2 domain occupies 39–107 (VREYLQDKLK…PVHINIEEIR (69 aa)).

This sequence belongs to the universal ribosomal protein uS3 family. Part of the 30S ribosomal subunit. Forms a tight complex with proteins S10 and S14.

Its function is as follows. Binds the lower part of the 30S subunit head. Binds mRNA in the 70S ribosome, positioning it for translation. In Pseudomonas syringae pv. syringae (strain B728a), this protein is Small ribosomal subunit protein uS3.